The chain runs to 207 residues: Guanylate kinase (207 aa).

One can recognise a Guanylate kinase-like domain in the interval 6–185 (GLLIVLSGPS…AKERIQSIVE (180 aa)). 13-20 (GPSGVGKG) contributes to the ATP binding site.

This sequence belongs to the guanylate kinase family.

The protein localises to the cytoplasm. It carries out the reaction GMP + ATP = GDP + ADP. Essential for recycling GMP and indirectly, cGMP. The protein is Guanylate kinase of Staphylococcus haemolyticus (strain JCSC1435).